We begin with the raw amino-acid sequence, 182 residues long: ATP-dependent protease subunit HslV (182 aa).

T9 is an active-site residue. Na(+)-binding residues include A167, C170, and T173.

The protein belongs to the peptidase T1B family. HslV subfamily. As to quaternary structure, a double ring-shaped homohexamer of HslV is capped on each side by a ring-shaped HslU homohexamer. The assembly of the HslU/HslV complex is dependent on binding of ATP.

Its subcellular location is the cytoplasm. The catalysed reaction is ATP-dependent cleavage of peptide bonds with broad specificity.. Allosterically activated by HslU binding. Its function is as follows. Protease subunit of a proteasome-like degradation complex believed to be a general protein degrading machinery. The polypeptide is ATP-dependent protease subunit HslV (Enterococcus faecalis (strain ATCC 700802 / V583)).